The following is a 134-amino-acid chain: Probable glycine cleavage system H protein (134 aa).

One can recognise a Lipoyl-binding domain in the interval 29–110 (TVLVGITDYA…PYGAWIAKIK (82 aa)). Lys70 carries the post-translational modification N6-lipoyllysine.

It belongs to the GcvH family. The glycine cleavage system is composed of four proteins: P, T, L and H. (R)-lipoate is required as a cofactor.

Functionally, the glycine cleavage system catalyzes the degradation of glycine. The H protein shuttles the methylamine group of glycine from the P protein to the T protein. This chain is Probable glycine cleavage system H protein, found in Pyrococcus abyssi (strain GE5 / Orsay).